The sequence spans 331 residues: Putative T-box protein 36 (331 aa).

Positions 29–210 (EITKKQWNQL…MNRFSRKRKY (182 aa)) form a DNA-binding region, T-box.

The protein localises to the nucleus. In Caenorhabditis elegans, this protein is Putative T-box protein 36 (tbx-36).